The primary structure comprises 423 residues: Tegument protein UL43 (423 aa).

Positions Met-1–Ser-12 are enriched in polar residues. The disordered stretch occupies residues Met-1–Arg-46.

The protein belongs to the herpesviridae US22 family.

The protein localises to the virion tegument. This is Tegument protein UL43 (UL43) from Homo sapiens (Human).